We begin with the raw amino-acid sequence, 356 residues long: MTKIAFTGGGTVGHVSVNLSLIPTALSQGYEALYIGSKNGIEREMIESQLPEIKYYPISSGKLRRYISLENAKDVFKVLKGILDARKVLKKEKPDLLFSKGGFVSVPVVIAAKSLNIPTIIHESDLTPGLANKIALKFAKKIYTTFEETLNYLPKEKADFIGATIREDLKNGNAHNGYQLTGFNENKKVLLVMGGSLGSKKLNSIIRENLDALLQQYQVIHLTGKGLKDAQVKKSGYIQYEFVKEDLTDLLAITDTVISRAGSNAIYEFLTLRIPMLLVPLGLDQSRGDQIDNANHFADKGYAKTIDEEQLTAQILLQELNEMEQERTRIINNMKSYEQSYTKEALFDKMIKDALN.

UDP-N-acetyl-alpha-D-glucosamine is bound by residues Arg166, Ser196, and Gln290.

The protein belongs to the glycosyltransferase 28 family. MurG subfamily.

It is found in the cell membrane. It catalyses the reaction Mur2Ac(oyl-L-Ala-gamma-D-Glu-L-Lys-D-Ala-D-Ala)-di-trans,octa-cis-undecaprenyl diphosphate + UDP-N-acetyl-alpha-D-glucosamine = beta-D-GlcNAc-(1-&gt;4)-Mur2Ac(oyl-L-Ala-gamma-D-Glu-L-Lys-D-Ala-D-Ala)-di-trans,octa-cis-undecaprenyl diphosphate + UDP + H(+). Its pathway is cell wall biogenesis; peptidoglycan biosynthesis. In terms of biological role, cell wall formation. Catalyzes the transfer of a GlcNAc subunit on undecaprenyl-pyrophosphoryl-MurNAc-pentapeptide (lipid intermediate I) to form undecaprenyl-pyrophosphoryl-MurNAc-(pentapeptide)GlcNAc (lipid intermediate II). This Staphylococcus aureus (strain Mu3 / ATCC 700698) protein is UDP-N-acetylglucosamine--N-acetylmuramyl-(pentapeptide) pyrophosphoryl-undecaprenol N-acetylglucosamine transferase.